The following is a 153-amino-acid chain: Large ribosomal subunit protein uL22 (153 aa).

This sequence belongs to the universal ribosomal protein uL22 family. In terms of assembly, part of the 50S ribosomal subunit.

Functionally, this protein binds specifically to 23S rRNA. It makes multiple contacts with different domains of the 23S rRNA in the assembled 50S subunit and ribosome. The globular domain of the protein is located near the polypeptide exit tunnel on the outside of the subunit, while an extended beta-hairpin is found that lines the wall of the exit tunnel in the center of the 70S ribosome. In Methanococcus aeolicus (strain ATCC BAA-1280 / DSM 17508 / OCM 812 / Nankai-3), this protein is Large ribosomal subunit protein uL22.